The primary structure comprises 923 residues: ATP-dependent Clp protease ATP-binding subunit ClpA homolog CD4B, chloroplastic (923 aa).

The Clp R domain maps to Phe-92–Glu-234. Repeat regions lie at residues Phe-95 to Gly-160 and Phe-170 to Glu-234. Residues Leu-255–Pro-502 are i. An ATP-binding site is contributed by Gly-300–Thr-307. The 36-residue stretch at Glu-509–Gln-544 folds into the UVR domain. The tract at residues Val-569 to Ser-760 is II. ATP is bound at residue Gly-643–Ser-650.

This sequence belongs to the ClpA/ClpB family.

The protein resides in the plastid. Its subcellular location is the chloroplast. In terms of biological role, may interact with a ClpP-like protease involved in degradation of denatured proteins in the chloroplast. This Solanum lycopersicum (Tomato) protein is ATP-dependent Clp protease ATP-binding subunit ClpA homolog CD4B, chloroplastic (CD4B).